A 98-amino-acid polypeptide reads, in one-letter code: Cytochrome b (98 aa).

The next 3 membrane-spanning stretches (helical) occupy residues 1 to 18 (LLGL…FLAM), 42 to 63 (WLIR…YLHV), and 78 to 98 (WNIG…GYVL). Residues H48 and H62 each coordinate heme b.

The protein belongs to the cytochrome b family. The cytochrome bc1 complex contains 3 respiratory subunits (MT-CYB, CYC1 and UQCRFS1), 2 core proteins (UQCRC1 and UQCRC2) and probably 6 low-molecular weight proteins. Heme b serves as cofactor.

It is found in the mitochondrion inner membrane. In terms of biological role, component of the ubiquinol-cytochrome c reductase complex (complex III or cytochrome b-c1 complex) that is part of the mitochondrial respiratory chain. The b-c1 complex mediates electron transfer from ubiquinol to cytochrome c. Contributes to the generation of a proton gradient across the mitochondrial membrane that is then used for ATP synthesis. In Scaphirhynchus platorynchus (Shovelnose sturgeon), this protein is Cytochrome b (mt-cyb).